The sequence spans 119 residues: Acidic phospholipase A2 DE-III (119 aa).

7 cysteine pairs are disulfide-bonded: Cys11/Cys72, Cys26/Cys118, Cys28/Cys44, Cys43/Cys99, Cys50/Cys92, Cys60/Cys85, and Cys79/Cys90. Residues Tyr27, Gly29, and Gly31 each coordinate Ca(2+). Residue His47 is part of the active site. Asp48 serves as a coordination point for Ca(2+). Asp93 is an active-site residue.

The protein belongs to the phospholipase A2 family. Group I subfamily. D49 sub-subfamily. Ca(2+) is required as a cofactor. As to expression, expressed by the venom gland.

The protein resides in the secreted. It carries out the reaction a 1,2-diacyl-sn-glycero-3-phosphocholine + H2O = a 1-acyl-sn-glycero-3-phosphocholine + a fatty acid + H(+). Its function is as follows. PLA2 catalyzes the calcium-dependent hydrolysis of the 2-acyl groups in 3-sn-phosphoglycerides. In Naja melanoleuca (Forest cobra), this protein is Acidic phospholipase A2 DE-III.